The primary structure comprises 1479 residues: Type VII secretion system protein EssC (1479 aa).

Residues 1 to 229 are Cytoplasmic-facing; that stretch reads MHKLIIKYNK…RPPQPIQKNN (229 aa). Residues 230–252 traverse the membrane as a helical segment; it reads TVIWRSIIPPLVMIALTVVIFLV. The Extracellular segment spans residues 253-256; the sequence is RPIG. A helical transmembrane segment spans residues 257–279; sequence IYILMMIGMSSVTIVFGITTYFS. The Cytoplasmic portion of the chain corresponds to 280–1479; it reads EKKKYNKDVE…QAYQKIRWFK (1200 aa). 2 consecutive FtsK domains span residues 652-846 and 997-1183; these read DDIL…QDSN and QGPM…SEVS. Residues 672 to 679 and 1014 to 1021 contribute to the ATP site; these read GTTGSGKS and GSPGYGRT.

Belongs to the EssC family. Homooligomer. Interacts with EsaE.

It localises to the cell membrane. Its function is as follows. Component of the type VII secretion system (Ess). Required for the secretion of substrates including EsxA and EsxB. However, unable to support secretion of the substrate protein EsxC. This Staphylococcus aureus (strain MSSA476) protein is Type VII secretion system protein EssC.